Consider the following 189-residue polypeptide: MAPAWSFLLALLLLSCNAICSLGCHLPHTHSLPNRRVLTLLRQLRRVSPSSCLQDRNDFAFPQEALGGSQLQKAQAISVLHEVTQHTFQLFSTEGSATTWDESLLDKLHAALDQQLTDLQACLRQEEGLRGAPLLKEGSSLAVRKYFHRLTLYLQEKRHSPCAWEVVRAEVMRAFSSSTNLQEKFRRKD.

Positions 1–23 (MAPAWSFLLALLLLSCNAICSLG) are cleaved as a signal peptide. 2 disulfide bridges follow: Cys24–Cys122 and Cys52–Cys162.

Belongs to the alpha/beta interferon family.

Its subcellular location is the secreted. Functionally, produced by macrophages, IFN-alpha have antiviral activities. Interferon stimulates the production of two enzymes: a protein kinase and an oligoadenylate synthetase. This is Interferon alpha-B (IFNAB) from Bos taurus (Bovine).